The primary structure comprises 155 residues: Small ribosomal subunit protein uS9 (155 aa).

This sequence belongs to the universal ribosomal protein uS9 family.

The chain is Small ribosomal subunit protein uS9 from Rhizobium johnstonii (strain DSM 114642 / LMG 32736 / 3841) (Rhizobium leguminosarum bv. viciae).